A 455-amino-acid polypeptide reads, in one-letter code: MKRLLVLCDCLWAWSLLLNALTERSYGQTSSQDELKDNTTVFTRILDRLLDGYDNRLRPGLGERVTEVKTDIFVTSFGPVSDHDMEYTIDVFFRQSWKDERLKFKGPMTVLRLNNLMASKIWTPDTFFHNGKKSVAHNMTMPNKLLRITEDGTLLYTMRLTVRAECPMHLEDFPMDVHACPLKFGSYAYTRAEVVYEWTREPARSVVVAEDGSRLNQYDLLGQTVDSGIVQSSTGEYVVMTTHFHLKRKIGYFVIQTYLPCIMTVILSQVSFWLNRESVPARTVFGVTTVLTMTTLSISARNSLPKVAYATAMDWFIAVCYAFVFSALIEFATVNYFTKRGYAWDGKSVVPEKPKKVKDPLIKKNNTYTAAATSYTPNIARDPGLATIAKSATIEPKEVKPETKPAEPKKTFNSVSKIDRLSRIAFPLLFGIFNLVYWATYLNREPQLKAPTPHQ.

The first 27 residues, 1-27 (MKRLLVLCDCLWAWSLLLNALTERSYG), serve as a signal peptide directing secretion. Over 28 to 253 (QTSSQDELKD…FHLKRKIGYF (226 aa)) the chain is Extracellular. N-linked (GlcNAc...) asparagine glycosylation is present at N38. R94 is a binding site for 4-aminobutanoate. An N-linked (GlcNAc...) asparagine glycan is attached at N138. A 4-aminobutanoate-binding site is contributed by T157. A disulfide bond links C166 and C180. The chain crosses the membrane as a helical span at residues 254–274 (VIQTYLPCIMTVILSQVSFWL). Over 275–279 (NRESV) the chain is Cytoplasmic. Residues 280-301 (PARTVFGVTTVLTMTTLSISAR) form a helical membrane-spanning segment. Residues 302–311 (NSLPKVAYAT) lie on the Extracellular side of the membrane. A helical transmembrane segment spans residues 312-333 (AMDWFIAVCYAFVFSALIEFAT). At 334 to 420 (VNYFTKRGYA…TFNSVSKIDR (87 aa)) the chain is on the cytoplasmic side. A helical membrane pass occupies residues 421-440 (LSRIAFPLLFGIFNLVYWAT). At 441–455 (YLNREPQLKAPTPHQ) the chain is on the extracellular side.

This sequence belongs to the ligand-gated ion channel (TC 1.A.9) family. Gamma-aminobutyric acid receptor (TC 1.A.9.5) subfamily. GABRA1 sub-subfamily. As to quaternary structure, heteropentamer, formed by a combination of alpha (GABRA1-6), beta (GABRB1-3), gamma (GABRG1-3), delta (GABRD), epsilon (GABRE), rho (GABRR1-3), pi (GABRP) and theta (GABRQ) subunits, each subunit exhibiting distinct physiological and pharmacological properties. Brain.

It is found in the postsynaptic cell membrane. The protein localises to the cell membrane. The enzyme catalyses chloride(in) = chloride(out). With respect to regulation, allosterically activated by benzodiazepines, the neuroanesthetic alphaxalone and pentobarbital. Inhibited by the antagonist bicuculline. Potentiated by histamine. Its function is as follows. Alpha subunit of the heteropentameric ligand-gated chloride channel gated by gamma-aminobutyric acid (GABA), a major inhibitory neurotransmitter in the brain. GABA-gated chloride channels, also named GABA(A) receptors (GABAAR), consist of five subunits arranged around a central pore and contain GABA active binding site(s) located at the alpha and beta subunit interface(s). When activated by GABA, GABAARs selectively allow the flow of chloride anions across the cell membrane down their electrochemical gradient. Chloride influx into the postsynaptic neuron following GABAAR opening decreases the neuron ability to generate a new action potential, thereby reducing nerve transmission. The GABAARs can also initiate the formation of functional inhibitory GABAergic synapses. GABAARs function also as histamine receptor where histamine binds at the interface of two neighboring beta subunits and potentiates GABA response. The polypeptide is Gamma-aminobutyric acid receptor subunit alpha-1 (GABRA1) (Gallus gallus (Chicken)).